The primary structure comprises 452 residues: Retinoid-inducible serine carboxypeptidase (452 aa).

The signal sequence occupies residues 1-28 (MELSRRICLVRLWLLLLSFLLGFSAGSA). Asparagine 64, asparagine 102, and asparagine 126 each carry an N-linked (GlcNAc...) asparagine glycan. Serine 167 is an active-site residue. N-linked (GlcNAc...) asparagine glycosylation is found at asparagine 192 and asparagine 362. Active-site residues include aspartate 371 and histidine 431.

Belongs to the peptidase S10 family.

It is found in the secreted. In terms of biological role, may be involved in vascular wall and kidney homeostasis. The chain is Retinoid-inducible serine carboxypeptidase (Scpep1) from Mus musculus (Mouse).